The sequence spans 908 residues: Translation initiation factor IF-2 (908 aa).

Disordered stretches follow at residues 123–154 and 212–278; these read EEPPILQPELPTEEKEELEVIESPQAPQEELK and KKEP…VSEK. Positions 407 to 577 constitute a tr-type G domain; sequence ERAPIVTIMG…LFEAELLELK (171 aa). The G1 stretch occupies residues 416–423; sequence GHVDHGKT. Residue 416 to 423 coordinates GTP; sequence GHVDHGKT. The tract at residues 441 to 445 is G2; the sequence is GITQH. The G3 stretch occupies residues 463 to 466; the sequence is DTPG. Residues 463–467 and 517–520 contribute to the GTP site; these read DTPGH and NKMD. The tract at residues 517 to 520 is G4; sequence NKMD. Positions 553–555 are G5; it reads SAI.

This sequence belongs to the TRAFAC class translation factor GTPase superfamily. Classic translation factor GTPase family. IF-2 subfamily.

Its subcellular location is the cytoplasm. Its function is as follows. One of the essential components for the initiation of protein synthesis. Protects formylmethionyl-tRNA from spontaneous hydrolysis and promotes its binding to the 30S ribosomal subunits. Also involved in the hydrolysis of GTP during the formation of the 70S ribosomal complex. This Amoebophilus asiaticus (strain 5a2) protein is Translation initiation factor IF-2.